Here is a 133-residue protein sequence, read N- to C-terminus: Thioredoxin-like protein CXXS1 (133 aa).

The region spanning 1-120 (MEIQQQKGVG…VKKMVDASAE (120 aa)) is the Thioredoxin domain.

It belongs to the thioredoxin family.

This Oryza sativa subsp. japonica (Rice) protein is Thioredoxin-like protein CXXS1.